The following is a 620-amino-acid chain: DNA mismatch repair protein MutL (620 aa).

Positions 332 to 402 (SELGLEAQPE…YRTPLRPATH (71 aa)) are disordered. Low complexity predominate over residues 352–365 (SNSTNSNVSSTSYS). Residues 378 to 394 (PLTTTATSYNQGQSSYR) are compositionally biased toward polar residues.

Belongs to the DNA mismatch repair MutL/HexB family.

This protein is involved in the repair of mismatches in DNA. It is required for dam-dependent methyl-directed DNA mismatch repair. May act as a 'molecular matchmaker', a protein that promotes the formation of a stable complex between two or more DNA-binding proteins in an ATP-dependent manner without itself being part of a final effector complex. The sequence is that of DNA mismatch repair protein MutL from Shewanella piezotolerans (strain WP3 / JCM 13877).